We begin with the raw amino-acid sequence, 277 residues long: uncharacterized protein (277 aa).

The tract at residues 232 to 262 (NNESAICESQASSKEDERSDKTTSSSKKKSF) is disordered. Over residues 234-243 (ESAICESQAS) the composition is skewed to polar residues.

It localises to the cytoplasm. The protein resides in the nucleus. This is an uncharacterized protein from Schizosaccharomyces pombe (strain 972 / ATCC 24843) (Fission yeast).